The primary structure comprises 603 residues: Proline--tRNA ligase (603 aa).

Belongs to the class-II aminoacyl-tRNA synthetase family. ProS type 1 subfamily. As to quaternary structure, homodimer.

It is found in the cytoplasm. The enzyme catalyses tRNA(Pro) + L-proline + ATP = L-prolyl-tRNA(Pro) + AMP + diphosphate. In terms of biological role, catalyzes the attachment of proline to tRNA(Pro) in a two-step reaction: proline is first activated by ATP to form Pro-AMP and then transferred to the acceptor end of tRNA(Pro). As ProRS can inadvertently accommodate and process non-cognate amino acids such as alanine and cysteine, to avoid such errors it has two additional distinct editing activities against alanine. One activity is designated as 'pretransfer' editing and involves the tRNA(Pro)-independent hydrolysis of activated Ala-AMP. The other activity is designated 'posttransfer' editing and involves deacylation of mischarged Ala-tRNA(Pro). The misacylated Cys-tRNA(Pro) is not edited by ProRS. The protein is Proline--tRNA ligase of Paenarthrobacter aurescens (strain TC1).